Reading from the N-terminus, the 868-residue chain is Leucine--tRNA ligase (868 aa).

Positions 42-52 (PYPSGKLHMGH) match the 'HIGH' region motif. The short motif at 627-631 (KMAKS) is the 'KMSKS' region element. Lysine 630 lines the ATP pocket.

This sequence belongs to the class-I aminoacyl-tRNA synthetase family.

The protein localises to the cytoplasm. It carries out the reaction tRNA(Leu) + L-leucine + ATP = L-leucyl-tRNA(Leu) + AMP + diphosphate. The protein is Leucine--tRNA ligase of Pseudomonas fluorescens (strain ATCC BAA-477 / NRRL B-23932 / Pf-5).